The primary structure comprises 179 residues: ATP synthase subunit delta (179 aa).

Belongs to the ATPase delta chain family. In terms of assembly, F-type ATPases have 2 components, F(1) - the catalytic core - and F(0) - the membrane proton channel. F(1) has five subunits: alpha(3), beta(3), gamma(1), delta(1), epsilon(1). F(0) has three main subunits: a(1), b(2) and c(10-14). The alpha and beta chains form an alternating ring which encloses part of the gamma chain. F(1) is attached to F(0) by a central stalk formed by the gamma and epsilon chains, while a peripheral stalk is formed by the delta and b chains.

The protein localises to the cell membrane. Its function is as follows. F(1)F(0) ATP synthase produces ATP from ADP in the presence of a proton or sodium gradient. F-type ATPases consist of two structural domains, F(1) containing the extramembraneous catalytic core and F(0) containing the membrane proton channel, linked together by a central stalk and a peripheral stalk. During catalysis, ATP synthesis in the catalytic domain of F(1) is coupled via a rotary mechanism of the central stalk subunits to proton translocation. In terms of biological role, this protein is part of the stalk that links CF(0) to CF(1). It either transmits conformational changes from CF(0) to CF(1) or is implicated in proton conduction. This Listeria welshimeri serovar 6b (strain ATCC 35897 / DSM 20650 / CCUG 15529 / CIP 8149 / NCTC 11857 / SLCC 5334 / V8) protein is ATP synthase subunit delta.